A 462-amino-acid chain; its full sequence is Probable threonine/serine transporter YbxG (462 aa).

12 helical membrane passes run 17–37, 38–58, 89–109, 121–141, 154–174, 190–210, 238–258, 276–296, 331–351, 355–375, 398–418, and 427–447; these read MIAL…STIS, WTGP…FFIM, ITAW…IIAV, PAWI…LISV, IKIV…FFGF, GGFF…VIAA, IIWR…TVYP, IGIT…AMSG, LYGT…NYIA, IFVY…FIIL, FAPF…VGMW, and LIVG…FGIG.

This sequence belongs to the amino acid-polyamine-organocation (APC) superfamily.

It is found in the cell membrane. Probable threonine transporter. Is also active as a minor serine permease. This Bacillus subtilis (strain 168) protein is Probable threonine/serine transporter YbxG (ybxG).